Reading from the N-terminus, the 1218-residue chain is Cytosolic carboxypeptidase 1 (1218 aa).

2 disordered regions span residues 476-512 (VVMKERASPKGEEAKEDPKGHDRTLPQQLGGQSRVAP) and 590-617 (TEDDEDTESHSSTEQAPSVEASDGPTLH). Basic and acidic residues predominate over residues 477 to 499 (VMKERASPKGEEAKEDPKGHDRT). The Peptidase M14 domain occupies 840–1130 (YPYTYSTLQM…KFCVGLLRLK (291 aa)). Zn(2+) is bound by residues histidine 912, glutamate 915, and histidine 1009. Catalysis depends on glutamate 1094, which acts as the Proton donor/acceptor. A Phosphoserine modification is found at serine 1160. The segment at 1193–1218 (ENTGDYEPSAQEEALSDSEVSRTHLI) is disordered.

The protein belongs to the peptidase M14 family. In terms of assembly, interacts with MYLK. The cofactor is Zn(2+). In terms of tissue distribution, widely expressed. Highly expressed in the cerebellum and cortex of adult mouse brain. Expressed at similar levels in both the cerebellum and the cortex throughout all developmental stages. Also expressed in sciatic nerve transection, spinal motor neurons undergoing axon regeneration, testis, heart, eye, lung, pancreas, intestine, stomach, pituitary, spleen, adrenal, kidney and in developing brain. Expression in cranial motor nuclei is the same as that observed in uninjured primary motor neurons. Expression is prevalent in sensory neurons and hippocampal CA3 neurons in addition to regenerating motor neurons.

The protein localises to the cytoplasm. It localises to the cytosol. It is found in the nucleus. Its subcellular location is the mitochondrion. The enzyme catalyses (L-glutamyl)(n+1)-gamma-L-glutamyl-L-glutamyl-[protein] + H2O = (L-glutamyl)(n)-gamma-L-glutamyl-L-glutamyl-[protein] + L-glutamate. The catalysed reaction is C-terminal L-alpha-aminoacyl-L-glutamyl-L-glutamyl-[tubulin] + H2O = C-terminal L-alpha-aminoacyl-L-glutamyl-[tubulin] + L-glutamate. Its function is as follows. Metallocarboxypeptidase that mediates protein deglutamylation of tubulin and non-tubulin target proteins. Catalyzes the removal of polyglutamate side chains present on the gamma-carboxyl group of glutamate residues within the C-terminal tail of alpha- and beta-tubulin. Specifically cleaves tubulin long-side-chains, while it is not able to remove the branching point glutamate. Also catalyzes the removal of polyglutamate residues from the carboxy-terminus of alpha-tubulin as well as non-tubulin proteins such as MYLK. Involved in KLF4 deglutamylation which promotes KLF4 proteasome-mediated degradation, thereby negatively regulating cell pluripotency maintenance and embryogenesis. The protein is Cytosolic carboxypeptidase 1 of Mus musculus (Mouse).